A 173-amino-acid polypeptide reads, in one-letter code: MSIILGIDPGSRVTGYGVIRQNGRHLQYLGSGCIRTSEKDLPGRLKQIYAGVTEIITQFQPDAFAIEQVFMAKNADSALKLGQARGAAIVSAVNHDLPVYEYAARLIKQAVVGTGGADKAQVQHMVQHMLKLPAKPQADAADALGVAICHANTNKTLIALAGQATSAKRGRYR.

Residues D8, E67, and D139 contribute to the active site. Positions 8, 67, and 139 each coordinate Mg(2+).

The protein belongs to the RuvC family. Homodimer which binds Holliday junction (HJ) DNA. The HJ becomes 2-fold symmetrical on binding to RuvC with unstacked arms; it has a different conformation from HJ DNA in complex with RuvA. In the full resolvosome a probable DNA-RuvA(4)-RuvB(12)-RuvC(2) complex forms which resolves the HJ. The cofactor is Mg(2+).

The protein resides in the cytoplasm. The enzyme catalyses Endonucleolytic cleavage at a junction such as a reciprocal single-stranded crossover between two homologous DNA duplexes (Holliday junction).. In terms of biological role, the RuvA-RuvB-RuvC complex processes Holliday junction (HJ) DNA during genetic recombination and DNA repair. Endonuclease that resolves HJ intermediates. Cleaves cruciform DNA by making single-stranded nicks across the HJ at symmetrical positions within the homologous arms, yielding a 5'-phosphate and a 3'-hydroxyl group; requires a central core of homology in the junction. The consensus cleavage sequence is 5'-(A/T)TT(C/G)-3'. Cleavage occurs on the 3'-side of the TT dinucleotide at the point of strand exchange. HJ branch migration catalyzed by RuvA-RuvB allows RuvC to scan DNA until it finds its consensus sequence, where it cleaves and resolves the cruciform DNA. This is Crossover junction endodeoxyribonuclease RuvC from Vibrio vulnificus (strain CMCP6).